A 144-amino-acid chain; its full sequence is 6-pyruvoyl tetrahydrobiopterin synthase (144 aa).

Residue serine 18 is modified to Phosphoserine. Residue histidine 23 coordinates Zn(2+). Phosphoserine is present on serine 27. The active-site Proton acceptor is the cysteine 42. Histidine 48 and histidine 50 together coordinate Zn(2+). Catalysis depends on histidine 89, which acts as the Charge relay system. The residue at position 127 (tyrosine 127) is a Phosphotyrosine. The Charge relay system role is filled by glutamate 133.

It belongs to the PTPS family. In terms of assembly, homodimer. Homohexamer formed of two homotrimers in a head to head fashion. The cofactor is Zn(2+). Post-translationally, phosphorylation of Ser-18 is required for maximal enzyme activity.

It catalyses the reaction 7,8-dihydroneopterin 3'-triphosphate = 6-pyruvoyl-5,6,7,8-tetrahydropterin + triphosphate + H(+). The protein operates within cofactor biosynthesis; tetrahydrobiopterin biosynthesis; tetrahydrobiopterin from 7,8-dihydroneopterin triphosphate: step 1/3. In terms of biological role, involved in the biosynthesis of tetrahydrobiopterin, an essential cofactor of aromatic amino acid hydroxylases. Catalyzes the transformation of 7,8-dihydroneopterin triphosphate into 6-pyruvoyl tetrahydropterin. The polypeptide is 6-pyruvoyl tetrahydrobiopterin synthase (Mus musculus (Mouse)).